A 461-amino-acid polypeptide reads, in one-letter code: Nuclear distribution protein PAC1 (461 aa).

One can recognise a LisH domain in the interval Gln-9–Glu-41. Residues Thr-61–Thr-88 adopt a coiled-coil conformation. 8 WD repeats span residues Ser-114 to Lys-155, His-157 to Arg-197, Gly-201 to Thr-248, Gly-251 to Lys-290, Gln-312 to Leu-355, Gly-357 to Lys-396, Ala-401 to Val-446, and Ala-448 to Asn-461.

The protein belongs to the WD repeat LIS1/nudF family. As to quaternary structure, self-associates. Interacts with NDL1 and dynein.

Its subcellular location is the cytoplasm. The protein localises to the cytoskeleton. The protein resides in the spindle pole. Functionally, positively regulates the activity of the minus-end directed microtubule motor protein dynein. May enhance dynein-mediated microtubule sliding by targeting dynein to the microtubule plus end. Required for nuclear migration during vegetative growth as well as development. Required for retrograde early endosome (EE) transport from the hyphal tip. Required for localization of dynein to the mitotic spindle poles. Recruits additional proteins to the dynein complex at SPBs. This is Nuclear distribution protein PAC1 from Arthroderma benhamiae (strain ATCC MYA-4681 / CBS 112371) (Trichophyton mentagrophytes).